The sequence spans 93 residues: Large ribosomal subunit protein uL23 (93 aa).

The protein belongs to the universal ribosomal protein uL23 family. Part of the 50S ribosomal subunit. Contacts protein L29, and trigger factor when it is bound to the ribosome.

One of the early assembly proteins it binds 23S rRNA. One of the proteins that surrounds the polypeptide exit tunnel on the outside of the ribosome. Forms the main docking site for trigger factor binding to the ribosome. This is Large ribosomal subunit protein uL23 from Helicobacter pylori (strain P12).